A 230-amino-acid chain; its full sequence is 3-beta-hydroxysteroid-Delta(8),Delta(7)-isomerase (230 aa).

Thr2 is modified (N-acetylthreonine). The next 4 membrane-spanning stretches (helical) occupy residues 29 to 49 (SHILVGLFSISGGLIVITWLL), 66 to 86 (LCWFAVCTFIHLVIEGWFSLY), 121 to 141 (METVTACLWGPLSLWVVIAFL), and 185 to 205 (FWFYFVFLNAVWLVIPSILVL). One can recognise an EXPERA domain in the interval 61-204 (GRRLALCWFA…VWLVIPSILV (144 aa)).

Belongs to the EBP family.

The protein resides in the endoplasmic reticulum membrane. Its subcellular location is the nucleus envelope. It localises to the cytoplasmic vesicle. The enzyme catalyses lathosterol = 5alpha-cholest-8-en-3beta-ol. It carries out the reaction zymosterol = 5alpha-cholesta-7,24-dien-3beta-ol. The catalysed reaction is 5,6alpha-epoxy-5alpha-cholestan-3beta-ol + H2O = 5alpha-cholestane-3beta,5,6beta-triol. It catalyses the reaction 5,6beta-epoxy-5beta-cholestan-3beta-ol + H2O = 5alpha-cholestane-3beta,5,6beta-triol. It participates in steroid biosynthesis; cholesterol biosynthesis. Its function is as follows. Isomerase that catalyzes the conversion of Delta(8)-sterols to their corresponding Delta(7)-isomers. Functionally, component of the microsomal antiestrogen binding site (AEBS), a multiproteic complex at the ER membrane that consists of an association between EBP and 7-dehydrocholesterol reductase/DHCR7. This complex is responsible for cholesterol-5,6-epoxide hydrolase (ChEH) activity, which consists in the hydration of cholesterol-5,6-epoxides (5,6-EC) into cholestane-3beta,5alpha,6beta-triol (CT). The precise role of each component of this complex has not been described yet. This is 3-beta-hydroxysteroid-Delta(8),Delta(7)-isomerase from Mus musculus (Mouse).